The primary structure comprises 341 residues: Antihemorrhagic factor BJ46a (341 aa).

The N-terminal stretch at 1–19 is a signal peptide; it reads MNSLVALVLLGQIIGSTLS. 2 consecutive Cystatin fetuin-A-type domains span residues 22 to 130 and 141 to 254; these read VRGD…AKCH and RNCP…SDCV. The Cell attachment site signature appears at 23 to 25; it reads RGD. Cystine bridges form between Cys28–Cys332, Cys85–Cys96, Cys110–Cys129, Cys143–Cys146, Cys205–Cys217, and Cys230–Cys253. Asn95 carries N-linked (GlcNAc...) asparagine glycosylation. Asn204 is a glycosylation site (N-linked (GlcNAc...) asparagine). Residues Asn282 and Asn293 are each glycosylated (N-linked (GlcNAc...) asparagine).

In terms of assembly, homodimer. Expressed by the liver.

It is found in the secreted. In terms of biological role, potent inhibitor of hemorrhagic activity but also proteolytic activities of atrolysin C and jararhagin. Inhibition occurs by formation of a non-covalent complex between BJ46a and the proteinases at their metalloproteinase domains. This chain is Antihemorrhagic factor BJ46a, found in Bothrops jararaca (Jararaca).